We begin with the raw amino-acid sequence, 562 residues long: Oxygen-dependent choline dehydrogenase (562 aa).

Residue 4-33 (DYIIIGAGSAGNVLATRLTEDPNTTVLLLE) coordinates FAD. Residue His-473 is the Proton acceptor of the active site.

Belongs to the GMC oxidoreductase family. It depends on FAD as a cofactor.

The catalysed reaction is choline + A = betaine aldehyde + AH2. It catalyses the reaction betaine aldehyde + NAD(+) + H2O = glycine betaine + NADH + 2 H(+). It participates in amine and polyamine biosynthesis; betaine biosynthesis via choline pathway; betaine aldehyde from choline (cytochrome c reductase route): step 1/1. Its function is as follows. Involved in the biosynthesis of the osmoprotectant glycine betaine. Catalyzes the oxidation of choline to betaine aldehyde and betaine aldehyde to glycine betaine at the same rate. This chain is Oxygen-dependent choline dehydrogenase, found in Escherichia coli O45:K1 (strain S88 / ExPEC).